The following is a 100-amino-acid chain: Integration host factor subunit alpha (100 aa).

A disordered region spans residues 50–70 (GNFQLRDKPQRPGRNPKTGEE).

Belongs to the bacterial histone-like protein family. In terms of assembly, heterodimer of an alpha and a beta chain.

In terms of biological role, this protein is one of the two subunits of integration host factor, a specific DNA-binding protein that functions in genetic recombination as well as in transcriptional and translational control. The chain is Integration host factor subunit alpha from Chromobacterium violaceum (strain ATCC 12472 / DSM 30191 / JCM 1249 / CCUG 213 / NBRC 12614 / NCIMB 9131 / NCTC 9757 / MK).